Reading from the N-terminus, the 51-residue chain is Sperm protamine P1 (51 aa).

2 disulfides stabilise this stretch: Cys-7–Cys-15 and Cys-38–Cys-48.

Belongs to the protamine P1 family. In terms of assembly, cross-linked by interchain disulfide bonds around the DNA-helix. In terms of processing, phosphorylated by SRPK1. In terms of tissue distribution, testis.

It is found in the nucleus. Its subcellular location is the chromosome. Functionally, protamines substitute for histones in the chromatin of sperm during the haploid phase of spermatogenesis. They compact sperm DNA into a highly condensed, stable and inactive complex. This is Sperm protamine P1 (Prm1) from Mus musculus (Mouse).